A 345-amino-acid chain; its full sequence is Phosphate acyltransferase (345 aa).

It belongs to the PlsX family. Homodimer. Probably interacts with PlsY.

Its subcellular location is the cytoplasm. It catalyses the reaction a fatty acyl-[ACP] + phosphate = an acyl phosphate + holo-[ACP]. It participates in lipid metabolism; phospholipid metabolism. In terms of biological role, catalyzes the reversible formation of acyl-phosphate (acyl-PO(4)) from acyl-[acyl-carrier-protein] (acyl-ACP). This enzyme utilizes acyl-ACP as fatty acyl donor, but not acyl-CoA. This chain is Phosphate acyltransferase, found in Limosilactobacillus fermentum (strain NBRC 3956 / LMG 18251) (Lactobacillus fermentum).